The primary structure comprises 119 residues: Ribonuclease P protein component (119 aa).

This sequence belongs to the RnpA family. As to quaternary structure, consists of a catalytic RNA component (M1 or rnpB) and a protein subunit.

It catalyses the reaction Endonucleolytic cleavage of RNA, removing 5'-extranucleotides from tRNA precursor.. Functionally, RNaseP catalyzes the removal of the 5'-leader sequence from pre-tRNA to produce the mature 5'-terminus. It can also cleave other RNA substrates such as 4.5S RNA. The protein component plays an auxiliary but essential role in vivo by binding to the 5'-leader sequence and broadening the substrate specificity of the ribozyme. The protein is Ribonuclease P protein component of Pasteurella multocida (strain Pm70).